The primary structure comprises 414 residues: Diaminopimelate decarboxylase (414 aa).

Position 52 is an N6-(pyridoxal phosphate)lysine (Lys-52). Pyridoxal 5'-phosphate contacts are provided by residues Gly-231 and 265–268; that span reads EPGR. Substrate contacts are provided by Arg-268, Arg-304, and Tyr-308. Cys-334 (proton donor) is an active-site residue. The substrate site is built by Glu-335 and Tyr-362. Position 362 (Tyr-362) interacts with pyridoxal 5'-phosphate.

This sequence belongs to the Orn/Lys/Arg decarboxylase class-II family. LysA subfamily. Homodimer. It depends on pyridoxal 5'-phosphate as a cofactor.

It carries out the reaction meso-2,6-diaminopimelate + H(+) = L-lysine + CO2. The protein operates within amino-acid biosynthesis; L-lysine biosynthesis via DAP pathway; L-lysine from DL-2,6-diaminopimelate: step 1/1. Specifically catalyzes the decarboxylation of meso-diaminopimelate (meso-DAP) to L-lysine. This Neisseria meningitidis serogroup B (strain ATCC BAA-335 / MC58) protein is Diaminopimelate decarboxylase.